Reading from the N-terminus, the 1072-residue chain is Guanylyl cyclase C (1072 aa).

A signal peptide spans 1–19; the sequence is MTSLLGLAVRLLLFQPALM. Residues 20–433 lie on the Extracellular side of the membrane; that stretch reads VFWASQVRQN…VPGLGPQILM (414 aa). 10 N-linked (GlcNAc...) asparagine glycosylation sites follow: Asn32, Asn75, Asn79, Asn179, Asn188, Asn195, Asn284, Asn307, Asn345, and Asn402. Residues 434–454 traverse the membrane as a helical segment; sequence IAVFTLTGILVVLLLIALLVL. The Cytoplasmic portion of the chain corresponds to 455–1072; the sequence is RKYRRDHALR…NNSDHDSTYF (618 aa). Positions 489 to 748 constitute a Protein kinase domain; it reads LKIDDDRRRD…KIESTLAKIF (260 aa). In terms of domain architecture, Guanylate cyclase spans 823–953; sequence TIYFSDIVGF…DTVNTASRME (131 aa).

The protein belongs to the adenylyl cyclase class-4/guanylyl cyclase family. Homotrimer. Interacts via its C-terminal region with NHERF4. Interacts with the lectin chaperone VIP36. Glycosylation at Asn-75 and/or Asn-79 is required for interaction with VIP36 while glycosylation at Asn-345 and Asn-402 modulates ligand-mediated GC-C activation.

The protein localises to the cell membrane. The protein resides in the endoplasmic reticulum membrane. It carries out the reaction GTP = 3',5'-cyclic GMP + diphosphate. Functionally, guanylyl cyclase that catalyzes synthesis of cyclic GMP (cGMP) from GTP. This Mus musculus (Mouse) protein is Guanylyl cyclase C (Gucy2c).